A 306-amino-acid chain; its full sequence is Pantothenate kinase (306 aa).

An ATP-binding site is contributed by 90-97 (GSVAVGKS).

The protein belongs to the prokaryotic pantothenate kinase family.

The protein localises to the cytoplasm. It catalyses the reaction (R)-pantothenate + ATP = (R)-4'-phosphopantothenate + ADP + H(+). It participates in cofactor biosynthesis; coenzyme A biosynthesis; CoA from (R)-pantothenate: step 1/5. This is Pantothenate kinase (coaA) from Listeria innocua serovar 6a (strain ATCC BAA-680 / CLIP 11262).